Here is a 45-residue protein sequence, read N- to C-terminus: Large ribosomal subunit protein bL34 (45 aa).

It belongs to the bacterial ribosomal protein bL34 family.

The protein is Large ribosomal subunit protein bL34 of Streptomyces avermitilis (strain ATCC 31267 / DSM 46492 / JCM 5070 / NBRC 14893 / NCIMB 12804 / NRRL 8165 / MA-4680).